Here is a 789-residue protein sequence, read N- to C-terminus: GDH/6PGL endoplasmic bifunctional protein (789 aa).

An N-terminal signal peptide occupies residues 1 to 16 (MLLAAMCLALLGCLQA). Glutamine 17 carries the pyrrolidone carboxylic acid modification. The tract at residues 17-524 (QELKGHVSII…GGQLTFSQQQ (508 aa)) is hexose-6-phosphate dehydrogenase. Residues 29 to 36 (GATGDLAK) and tyrosine 146 contribute to the NADP(+) site. An N-linked (GlcNAc...) asparagine glycan is attached at asparagine 154. Lysine 171 contributes to the NADP(+) binding site. D-glucose 6-phosphate-binding positions include lysine 171, 201–205 (HYLGK), glutamate 240, and aspartate 259. Lysine 205 is modified (N6-succinyllysine). Catalysis depends on histidine 264, which acts as the Proton acceptor. The N-linked (GlcNAc...) asparagine glycan is linked to asparagine 279. D-glucose 6-phosphate-binding residues include lysine 357 and arginine 362. Residue arginine 367 coordinates NADP(+). An N6-succinyllysine modification is found at lysine 424. The interval 525–538 (LEVLIPDLGSVPKP) is linker. The segment at 539 to 789 (SDFQVLGARY…WYMDYEAFLG (251 aa)) is 6-phosphogluconolactonase. Tryptophan 615 contacts NADP(+). A glycan (N-linked (GlcNAc...) asparagine) is linked at asparagine 681.

This sequence in the N-terminal section; belongs to the glucose-6-phosphate dehydrogenase family. The protein in the C-terminal section; belongs to the glucosamine/galactosamine-6-phosphate isomerase family. 6-phosphogluconolactonase subfamily. Homodimer. Expressed in liver (at protein level). Expressed in muscles. Expressed in adipose tissues.

The protein localises to the endoplasmic reticulum lumen. The catalysed reaction is D-glucose 6-phosphate + NAD(+) = 6-phospho-D-glucono-1,5-lactone + NADH + H(+). The enzyme catalyses D-glucose 6-phosphate + NADP(+) = 6-phospho-D-glucono-1,5-lactone + NADPH + H(+). It carries out the reaction 6-phospho-D-glucono-1,5-lactone + H2O = 6-phospho-D-gluconate + H(+). It catalyses the reaction 2-deoxy-D-glucose 6-phosphate + NAD(+) = 2-deoxy-6-phospho-D-glucono-1,5-lactone + NADH + H(+). The catalysed reaction is 2-deoxy-D-glucose 6-phosphate + NADP(+) = 2-deoxy-6-phospho-D-glucono-1,5-lactone + NADPH + H(+). The enzyme catalyses D-galactose 6-phosphate + NADP(+) = 6-phospho-D-galactono-1,5-lactone + NADPH + H(+). It carries out the reaction D-galactose 6-phosphate + NAD(+) = 6-phospho-D-galactono-1,5-lactone + NADH + H(+). It catalyses the reaction D-glucosamine 6-phosphate + NADP(+) = 2-amino-2-deoxy-6-phospho-D-glucono-1,5-lactone + NADPH + 2 H(+). The catalysed reaction is D-glucose + NAD(+) = D-glucono-1,5-lactone + NADH + H(+). The enzyme catalyses D-glucose + NADP(+) = D-glucono-1,5-lactone + NADPH + H(+). It carries out the reaction D-glucose 6-sulfate + NADP(+) = 6-sulfo-D-glucono-1,5-lactone + NADPH + H(+). Its pathway is carbohydrate degradation; pentose phosphate pathway; D-ribulose 5-phosphate from D-glucose 6-phosphate (oxidative stage). It participates in carbohydrate degradation; pentose phosphate pathway; D-ribulose 5-phosphate from D-glucose 6-phosphate (oxidative stage): step 2/3. In terms of biological role, bifunctional enzyme localized in the lumen of the endoplasmic reticulum that catalyzes the first two steps of the oxidative branch of the pentose phosphate pathway/shunt, an alternative to glycolysis and a major source of reducing power and metabolic intermediates for biosynthetic processes. Has a hexose-6-phosphate dehydrogenase activity, with broad substrate specificity compared to glucose-6-phosphate 1-dehydrogenase/G6PD, and catalyzes the first step of the pentose phosphate pathway. In addition, acts as a 6-phosphogluconolactonase and catalyzes the second step of the pentose phosphate pathway. May have a dehydrogenase activity for alternative substrates including glucosamine 6-phosphate and glucose 6-sulfate. The main function of this enzyme is to provide reducing equivalents such as NADPH to maintain the adequate levels of reductive cofactors in the oxidizing environment of the endoplasmic reticulum. By producing NADPH that is needed by reductases of the lumen of the endoplasmic reticulum like corticosteroid 11-beta-dehydrogenase isozyme 1/HSD11B1, indirectly regulates their activity. The protein is GDH/6PGL endoplasmic bifunctional protein of Mus musculus (Mouse).